We begin with the raw amino-acid sequence, 298 residues long: uncharacterized protein (298 aa).

A disordered region spans residues 264–298; it reads APPPPLPCITTGPAALEDSPKASKANKGKKAKAKK. Basic residues predominate over residues 287–298; sequence KANKGKKAKAKK.

This is an uncharacterized protein from Mus musculus (Mouse).